A 347-amino-acid polypeptide reads, in one-letter code: Tryptophan--tRNA ligase (347 aa).

Residues 10–12 (QAS) and 18–19 (GN) contribute to the ATP site. The short motif at 11-19 (ASGRQHLGN) is the 'HIGH' region element. Position 140 (aspartate 140) interacts with L-tryptophan. ATP-binding positions include 152–154 (GND), isoleucine 191, and 200–204 (KMSKS). Positions 200 to 204 (KMSKS) match the 'KMSKS' region motif.

It belongs to the class-I aminoacyl-tRNA synthetase family. Homodimer.

The protein resides in the cytoplasm. The catalysed reaction is tRNA(Trp) + L-tryptophan + ATP = L-tryptophyl-tRNA(Trp) + AMP + diphosphate + H(+). Its function is as follows. Catalyzes the attachment of tryptophan to tRNA(Trp). The protein is Tryptophan--tRNA ligase of Mycoplasma genitalium (strain ATCC 33530 / DSM 19775 / NCTC 10195 / G37) (Mycoplasmoides genitalium).